A 653-amino-acid polypeptide reads, in one-letter code: Forkhead box protein O1 (653 aa).

Disordered stretches follow at residues methionine 1–alanine 64 and leucine 117–asparagine 156. Threonine 24 bears the Phosphothreonine; by PKB/AKT1 or PKB/AKT2 and SGK1 mark. The segment covering serine 35–alanine 64 has biased composition (low complexity). Over residues proline 119–alanine 140 the composition is skewed to pro residues. Residues alanine 157–serine 233 constitute a DNA-binding region (fork-head). 2 DNA-binding regions span residues asparagine 209–serine 216 and serine 232–tryptophan 235. A Phosphoserine; by STK4/MST1 modification is found at serine 210. Serine 216, serine 232, and serine 233 each carry phosphoserine. Residues serine 232–aspartate 335 form a disordered region. N6-acetyllysine is present on residues lysine 243 and lysine 246. Serine 247 is modified (phosphoserine; by CDK1). Residues arginine 249 and arginine 251 each carry the omega-N-methylarginine; by PRMT1 modification. The Nuclear localization signal motif lies at arginine 249–arginine 251. Phosphoserine; by PKB/AKT1 and SGK1 is present on serine 254. 3 positions are modified to N6-acetyllysine: lysine 260, lysine 263, and lysine 272. The interval glycine 281–glutamine 561 is sufficient for interaction with NLK. A phosphoserine mark is found at serine 285 and serine 296. The segment covering asparagine 307–glycine 324 has biased composition (polar residues). Position 317 is a phosphoserine; by PKB/AKT1 or PKB/AKT2 (serine 317). Serine 320 is modified (phosphoserine; by CK1 and SGK1). Serine 323 bears the Phosphoserine mark. Serine 327 bears the Phosphoserine; by DYRK1A mark. Threonine 331 carries the post-translational modification Phosphothreonine. The required for interaction with RUNX2 stretch occupies residues serine 361 to glutamine 457. An N6-acetyllysine modification is found at lysine 421. The Required for interaction with SIRT1 signature appears at leucine 460–leucine 464.

In terms of assembly, interacts with LRPPRC. Interacts with RUNX2; the interaction inhibits RUNX2 transcriptional activity and mediates the IGF1/insulin-dependent BGLAP expression in osteoblasts Interacts with PPP2R1A; the interaction regulates the dephosphorylation of FOXO1 at Thr-24 and Ser-254 leading to its nuclear import. Interacts with NLK. Interacts with SIRT1; the interaction results in the deacetylation of FOXO1 leading to activation of FOXO1-mediated transcription of genes involved in DNA repair and stress resistance. Binds to CDK1. Interacts with the 14-3-3 proteins, YWHAG and YWHAZ; the interactions require insulin-stimulated phosphorylation on Thr-24, promote nuclear exit and loss of transcriptional activity. Interacts with SKP2; the interaction ubiquitinates FOXO1 leading to its proteasomal degradation. The interaction requires the presence of KRIT1. Interacts (via the C-terminal half) with ATF4 (via its DNA-binding domain); the interaction occurs in osteoblasts, regulates glucose homeostasis via suppression of beta-cell proliferation and subsequent decrease in insulin production. Interacts with PRMT1; the interaction methylates FOXO1, prevents PKB/AKT1 phosphorylation and retains FOXO1 in the nucleus. Interacts with EP300 and CREBBP; the interactions acetylate FOXO1. Interacts with SIRT2; the interaction is disrupted in response to oxidative stress or serum deprivation, leading to increased level of acetylated FOXO1, which promotes stress-induced autophagy by stimulating E1-like activating enzyme ATG7. Interacts (acetylated form) with ATG7; the interaction is increased in response to oxidative stress or serum deprivation and promotes the autophagic process leading to cell death. Interacts (acetylated form) with PPARG. Interacts with XBP1; this interaction is direct and leads to FOXO1 ubiquitination and degradation via the proteasome pathway. Interacts with WDFY2. Forms a complex with WDFY2 and AKT1. Interacts with CRY1. Interacts with PPIA/CYPA; the interaction promotes FOXO1 dephosphorylation, nuclear accumulation and transcriptional activity. Interacts with TOX4; FOXO1 is required for full induction of TOX4-dependent activity and the interaction is inhibited by insulin. Interacts (when phosphorylated on Ser-254) with STUB1/CHIP. Phosphorylation by NLK promotes nuclear export and inhibits the transcriptional activity. In response to growth factors, phosphorylation on Thr-24, Ser-254 and Ser-320 by PKB/AKT1 promotes nuclear export and inactivation of transactivational activity. Phosphorylation on Thr-24 is required for binding 14-3-3 proteins. Phosphorylation of Ser-254 decreases DNA-binding activity and promotes the phosphorylation of Thr-24 and Ser-317, permitting phosphorylation of Ser-320 and Ser-323, probably by CDK1, leading to nuclear exclusion and loss of function. Stress signals, such as response to oxygen or nitric oxide, attenuate the PKB/AKT1-mediated phosphorylation leading to nuclear retention. Phosphorylation of Ser-327 is independent of IGF1 and leads to reduced function. Dephosphorylated on Thr-24 and Ser-254 by PP2A in beta-cells under oxidative stress leading to nuclear retention. Phosphorylation of Ser-247 by CDK1 disrupts binding of 14-3-3 proteins leading to nuclear accumulation and has no effect on DNA binding nor transcriptional activity. Phosphorylation by STK4/MST1 on Ser-210, upon oxidative stress, inhibits binding to 14-3-3 proteins and nuclear export. PPIA/CYPA promotes its dephosphorylation on Ser-254. Post-translationally, ubiquitinated by SKP2. Ubiquitination leads to proteasomal degradation. Ubiquitinated by STUB1/CHIP; when Ser-254 is phosphorylated. In terms of processing, methylation inhibits AKT1-mediated phosphorylation at Ser-254 and is increased by oxidative stress. Acetylated. Acetylation at Lys-260 and Lys-272 are necessary for autophagic cell death induction. Deacetylated by SIRT2 in response to oxidative stress or serum deprivation, thereby negatively regulating FOXO1-mediated autophagic cell death. Once in the nucleus, acetylated by CREBBP/EP300. Acetylation diminishes the interaction with target DNA and attenuates the transcriptional activity. It increases the phosphorylation at Ser-254. Deacetylation by SIRT1 results in reactivation of the transcriptional activity. Oxidative stress by hydrogen peroxide treatment appears to promote deacetylation and uncoupling of insulin-induced phosphorylation. By contrast, resveratrol acts independently of acetylation. Acetylated at Lys-421, promoting its localization to the nucleus and transcription factor activity. Deacetylation at Lys-421 by SIRT6, promotes its translocation into the cytoplasm, preventing its transcription factor activity. Deacetylation and subsequent inhibition by SIRT6 has different effects depending on cell types: it inhibits gluconeogenesis in hepatocytes, promotes glucose sensing in pancreatic beta-cells and regulates lipid catabolism in brown adipocytes.

Its subcellular location is the cytoplasm. It is found in the nucleus. In terms of biological role, transcription factor that is the main target of insulin signaling and regulates metabolic homeostasis in response to oxidative stress. Binds to the insulin response element (IRE) with consensus sequence 5'-TT[G/A]TTTTG-3' and the related Daf-16 family binding element (DBE) with consensus sequence 5'-TT[G/A]TTTAC-3'. Activity suppressed by insulin. Main regulator of redox balance and osteoblast numbers and controls bone mass. Orchestrates the endocrine function of the skeleton in regulating glucose metabolism. Also acts as a key regulator of chondrogenic commitment of skeletal progenitor cells in response to lipid availability: when lipids levels are low, translocates to the nucleus and promotes expression of SOX9, which induces chondrogenic commitment and suppresses fatty acid oxidation. Acts synergistically with ATF4 to suppress osteocalcin/BGLAP activity, increasing glucose levels and triggering glucose intolerance and insulin insensitivity. Also suppresses the transcriptional activity of RUNX2, an upstream activator of osteocalcin/BGLAP. Acts as an inhibitor of glucose sensing in pancreatic beta cells by acting as a transcription repressor and suppressing expression of PDX1. In hepatocytes, promotes gluconeogenesis by acting together with PPARGC1A and CEBPA to activate the expression of genes such as IGFBP1, G6PC1 and PCK1. Also promotes gluconeogenesis by directly promoting expression of PPARGC1A and G6PC1. Important regulator of cell death acting downstream of CDK1, PKB/AKT1 and STK4/MST1. Promotes neural cell death. Mediates insulin action on adipose tissue. Regulates the expression of adipogenic genes such as PPARG during preadipocyte differentiation and, adipocyte size and adipose tissue-specific gene expression in response to excessive calorie intake. Regulates the transcriptional activity of GADD45A and repair of nitric oxide-damaged DNA in beta-cells. Required for the autophagic cell death induction in response to starvation or oxidative stress in a transcription-independent manner. Mediates the function of MLIP in cardiomyocytes hypertrophy and cardiac remodeling. Positive regulator of apoptosis in cardiac smooth muscle cells as a result of its transcriptional activation of pro-apoptotic genes. Regulates endothelial cell (EC) viability and apoptosis in a PPIA/CYPA-dependent manner via transcription of CCL2 and BCL2L11 which are involved in EC chemotaxis and apoptosis. The sequence is that of Forkhead box protein O1 (FOXO1) from Ictidomys tridecemlineatus (Thirteen-lined ground squirrel).